The following is a 325-amino-acid chain: MAKRIQFAAYGGPEVLEYRDYQPAEPGPREVRVRNRAIGLNFIDTYYRSGLYPAPGLPSGLGSEGAGEVEAVGSEVTRFKVGDRVAYATGPLGAYSELHVLAEEKLVHLPDGIDFEQAAAVMLKGLTTQYLLRQTYELRGGETILFHAAAGGVGLFACQWAKALGVQLIGTVSSPEKARLARQHGAWETIDYSHENVARRVLELTDGKKCPVVYDSVGKDTWETSLDCVAPRGLLVSFGNASGPVTGVNLGILSQKGSLYVTRPTLGSYADTPEKLQAMADELFGLIERGDIRIEINQRFALAEAARAHTELAARRTTGSTVLLP.

This sequence belongs to the zinc-containing alcohol dehydrogenase family. Quinone oxidoreductase subfamily.

It catalyses the reaction 2 a quinone + NADPH + H(+) = 2 a 1,4-benzosemiquinone + NADP(+). This chain is Quinone oxidoreductase (qor), found in Pseudomonas aeruginosa (strain ATCC 15692 / DSM 22644 / CIP 104116 / JCM 14847 / LMG 12228 / 1C / PRS 101 / PAO1).